We begin with the raw amino-acid sequence, 26 residues long: Delta-hemolysin (26 aa).

Met-1 carries the N-formylmethionine modification.

The protein belongs to the delta-lysin family.

Its subcellular location is the secreted. The protein resides in the host cell membrane. Functionally, lyses erythrocytes and many other mammalian cells. This is Delta-hemolysin (hld) from Staphylococcus aureus (strain MSSA476).